The chain runs to 363 residues: Transcription factor IIIA (363 aa).

C2H2-type zinc fingers lie at residues 38 to 62, 68 to 92, 98 to 123, 130 to 154, 160 to 184, 187 to 211, 215 to 237, 244 to 269, and 275 to 299; these read FICSFPDCSASYNKAWKLDAHLCKH, FVCDYEGCGKAFIRDYHLSRHILIH, FVCADNGCNQKFSTKSNLKKHIERKH, YVCNFEGCKKAFKKHQQLRTHQCQH, FRCTHEGCGKHFASPSRLKRHGKVH, YLCQKGCSFVGKTWTELLKHTREAH, VTCTVCQKMFKRKDHLKQHMKTH, YRCPREGCARTYTTVFNLQSHILSFH, and FVCEHAGCGKTFAMKQSLMRHSVVH. The interval 301 to 363 is disordered; it reads PDKKRMKLKV…LAPAALLTVH (63 aa). The span at 338-350 shows a compositional bias: low complexity; that stretch reads SLPNSTESSSSPE.

It localises to the nucleus. Functionally, involved in ribosomal large subunit biogenesis. Binds the approximately 50 base pairs internal control region (ICR) of 5S ribosomal RNA genes. It is required for their RNA polymerase III-dependent transcription and may also maintain the transcription of other genes. Also binds the transcribed 5S RNA's. The protein is Transcription factor IIIA (Gtf3a) of Rattus norvegicus (Rat).